Reading from the N-terminus, the 365-residue chain is tRNA 2-selenouridine synthase (365 aa).

Residues 12–136 (FLHDVPLLDV…LRMFLIDTTQ (125 aa)) enclose the Rhodanese domain. Residue cysteine 95 is the S-selanylcysteine intermediate of the active site.

This sequence belongs to the SelU family. As to quaternary structure, monomer.

It carries out the reaction 5-methylaminomethyl-2-thiouridine(34) in tRNA + selenophosphate + (2E)-geranyl diphosphate + H2O + H(+) = 5-methylaminomethyl-2-selenouridine(34) in tRNA + (2E)-thiogeraniol + phosphate + diphosphate. It catalyses the reaction 5-methylaminomethyl-2-thiouridine(34) in tRNA + (2E)-geranyl diphosphate = 5-methylaminomethyl-S-(2E)-geranyl-thiouridine(34) in tRNA + diphosphate. The enzyme catalyses 5-methylaminomethyl-S-(2E)-geranyl-thiouridine(34) in tRNA + selenophosphate + H(+) = 5-methylaminomethyl-2-(Se-phospho)selenouridine(34) in tRNA + (2E)-thiogeraniol. The catalysed reaction is 5-methylaminomethyl-2-(Se-phospho)selenouridine(34) in tRNA + H2O = 5-methylaminomethyl-2-selenouridine(34) in tRNA + phosphate. Functionally, involved in the post-transcriptional modification of the uridine at the wobble position (U34) of tRNA(Lys), tRNA(Glu) and tRNA(Gln). Catalyzes the conversion of 2-thiouridine (S2U-RNA) to 2-selenouridine (Se2U-RNA). Acts in a two-step process involving geranylation of 2-thiouridine (S2U) to S-geranyl-2-thiouridine (geS2U) and subsequent selenation of the latter derivative to 2-selenouridine (Se2U) in the tRNA chain. The polypeptide is tRNA 2-selenouridine synthase (Verminephrobacter eiseniae (strain EF01-2)).